The following is a 225-amino-acid chain: Polyadenylate-binding protein 2 (225 aa).

A compositionally biased stretch (acidic residues) spans 1–36 (MADEDISLNEDQLLESMEETNGEQETEIVTETEEEG). The segment at 1 to 42 (MADEDISLNEDQLLESMEETNGEQETEIVTETEEEGSMQIDP) is disordered. A coiled-coil region spans residues 14–74 (LESMEETNGE…QSEVDKQMAG (61 aa)). The region spanning 96–173 (RSVYVGNVDY…RQIKVMSKRT (78 aa)) is the RRM domain.

The protein resides in the nucleus. It localises to the cytoplasm. In terms of biological role, involved in the 3'-end formation of mRNA precursors (pre-mRNA) by the addition of a poly(A) tail of 200-250 nt to the upstream cleavage product. Stimulates poly(A) polymerase (PAPOLA) conferring processivity on the poly(A) tail elongation reaction and also controls the poly(A) tail length. Increases the affinity of poly(A) polymerase for RNA. Binds to poly(A) and to poly(G) with high affinity. May protect the poly(A) tail from degradation. The protein is Polyadenylate-binding protein 2 of Drosophila pseudoobscura pseudoobscura (Fruit fly).